The following is a 289-amino-acid chain: Cuticle collagen 19 (289 aa).

The N-terminal stretch at 1–18 (MGKLIVVGSCGVLVCVLA) is a signal peptide. Residues 95–289 (SEGCPAGPPG…PCPSRAAYKA (195 aa)) are disordered. Triple-helical region stretches follow at residues 101-130 (GPPG…PGVI) and 147-269 (GRPG…KGED). Gly residues predominate over residues 162 to 183 (GPAGGNGRRGPPGPVGGPGEQG). 2 stretches are compositionally biased toward low complexity: residues 184–207 (PQGD…GEPG) and 223–239 (PRGE…PGND).

Belongs to the cuticular collagen family. Collagen polypeptide chains are complexed within the cuticle by disulfide bonds and other types of covalent cross-links.

Functionally, nematode cuticles are composed largely of collagen-like proteins. The cuticle functions both as an exoskeleton and as a barrier to protect the worm from its environment. This Caenorhabditis elegans protein is Cuticle collagen 19 (col-19).